The primary structure comprises 428 residues: Enolase (428 aa).

Residue Q163 participates in (2R)-2-phosphoglycerate binding. Residue E205 is the Proton donor of the active site. Mg(2+) is bound by residues D242, E283, and D310. Positions 335, 364, 365, and 386 each coordinate (2R)-2-phosphoglycerate. K335 acts as the Proton acceptor in catalysis.

This sequence belongs to the enolase family. Mg(2+) serves as cofactor.

Its subcellular location is the cytoplasm. The protein resides in the secreted. The protein localises to the cell surface. It catalyses the reaction (2R)-2-phosphoglycerate = phosphoenolpyruvate + H2O. It participates in carbohydrate degradation; glycolysis; pyruvate from D-glyceraldehyde 3-phosphate: step 4/5. Catalyzes the reversible conversion of 2-phosphoglycerate (2-PG) into phosphoenolpyruvate (PEP). It is essential for the degradation of carbohydrates via glycolysis. The sequence is that of Enolase from Saccharopolyspora erythraea (strain ATCC 11635 / DSM 40517 / JCM 4748 / NBRC 13426 / NCIMB 8594 / NRRL 2338).